The chain runs to 138 residues: Large ribosomal subunit protein uL16 (138 aa).

A compositionally biased stretch (basic residues) spans 1-13; sequence MLQPSRRKYRKEQ. A disordered region spans residues 1-24; it reads MLQPSRRKYRKEQKGRNTGLASRG.

The protein belongs to the universal ribosomal protein uL16 family. As to quaternary structure, part of the 50S ribosomal subunit.

Binds 23S rRNA and is also seen to make contacts with the A and possibly P site tRNAs. The sequence is that of Large ribosomal subunit protein uL16 from Bordetella bronchiseptica (strain ATCC BAA-588 / NCTC 13252 / RB50) (Alcaligenes bronchisepticus).